Reading from the N-terminus, the 503-residue chain is ATP synthase subunit alpha (503 aa).

169-176 (GDRKTGKT) provides a ligand contact to ATP.

This sequence belongs to the ATPase alpha/beta chains family. F-type ATPases have 2 components, CF(1) - the catalytic core - and CF(0) - the membrane proton channel. CF(1) has five subunits: alpha(3), beta(3), gamma(1), delta(1), epsilon(1). CF(0) has three main subunits: a(1), b(2) and c(9-12). The alpha and beta chains form an alternating ring which encloses part of the gamma chain. CF(1) is attached to CF(0) by a central stalk formed by the gamma and epsilon chains, while a peripheral stalk is formed by the delta and b chains.

It localises to the cell membrane. It carries out the reaction ATP + H2O + 4 H(+)(in) = ADP + phosphate + 5 H(+)(out). Functionally, produces ATP from ADP in the presence of a proton gradient across the membrane. The alpha chain is a regulatory subunit. The sequence is that of ATP synthase subunit alpha from Lactobacillus delbrueckii subsp. bulgaricus (strain ATCC BAA-365 / Lb-18).